The sequence spans 205 residues: Small ribosomal subunit protein uS4 (205 aa).

A disordered region spans residues 18 to 46 (NIWGRPKSPVNRREYGPGQHGQRRKGKLS). In terms of domain architecture, S4 RNA-binding spans 94–157 (RRLDTVVFRA…KQLAIVLEAT (64 aa)).

Belongs to the universal ribosomal protein uS4 family. In terms of assembly, part of the 30S ribosomal subunit. Contacts protein S5. The interaction surface between S4 and S5 is involved in control of translational fidelity.

In terms of biological role, one of the primary rRNA binding proteins, it binds directly to 16S rRNA where it nucleates assembly of the body of the 30S subunit. Functionally, with S5 and S12 plays an important role in translational accuracy. This Bradyrhizobium sp. (strain BTAi1 / ATCC BAA-1182) protein is Small ribosomal subunit protein uS4.